The primary structure comprises 90 residues: Putative beta-neurotoxin RjAa14F (90 aa).

Residues 1–18 form the signal peptide; sequence MKILIFIIASFMLIGVEC. The LCN-type CS-alpha/beta domain occupies 19–89; the sequence is KEGYPTNSEG…VWDPNNNKCV (71 aa). 4 disulfides stabilise this stretch: Cys-29–Cys-88, Cys-33–Cys-62, Cys-40–Cys-69, and Cys-44–Cys-71.

Belongs to the long (4 C-C) scorpion toxin superfamily. Sodium channel inhibitor family. Beta subfamily. Expressed by the venom gland.

It localises to the secreted. In terms of biological role, beta toxins bind voltage-independently at site-4 of sodium channels (Nav) and shift the voltage of activation toward more negative potentials thereby affecting sodium channel activation and promoting spontaneous and repetitive firing. This Rhopalurus junceus (Caribbean blue scorpion) protein is Putative beta-neurotoxin RjAa14F.